Reading from the N-terminus, the 77-residue chain is RNA-binding protein Hfq (77 aa).

In terms of domain architecture, Sm spans 9-69 (DQFLNQLRKE…ISTFAPQKNV (61 aa)).

It belongs to the Hfq family. Homohexamer.

In terms of biological role, RNA chaperone that binds small regulatory RNA (sRNAs) and mRNAs to facilitate mRNA translational regulation in response to envelope stress, environmental stress and changes in metabolite concentrations. Also binds with high specificity to tRNAs. The polypeptide is RNA-binding protein Hfq (Shouchella clausii (strain KSM-K16) (Alkalihalobacillus clausii)).